Consider the following 161-residue polypeptide: Cytochrome c-type biogenesis protein CcmE (161 aa).

At 1-8 (MNARRKKR) the chain is on the cytoplasmic side. Residues 9-29 (LALATALIGGVAAIASLLLYA) traverse the membrane as a helical; Signal-anchor for type II membrane protein segment. At 30–161 (LNSNLNLFYT…DYNAEQKSGY (132 aa)) the chain is on the periplasmic side. Residues His-131 and Tyr-135 each coordinate heme.

The protein belongs to the CcmE/CycJ family.

Its subcellular location is the cell inner membrane. Its function is as follows. Heme chaperone required for the biogenesis of c-type cytochromes. Transiently binds heme delivered by CcmC and transfers the heme to apo-cytochromes in a process facilitated by CcmF and CcmH. This is Cytochrome c-type biogenesis protein CcmE from Shewanella woodyi (strain ATCC 51908 / MS32).